We begin with the raw amino-acid sequence, 430 residues long: Aspartate aminotransferase, mitochondrial (430 aa).

The transit peptide at 1-29 (MALLHSGRVLPGIAAAFHPGLAAAASARA) directs the protein to the mitochondrion. Thr48 carries the post-translational modification Phosphothreonine. The residue at position 59 (Lys59) is an N6-acetyllysine. Substrate is bound at residue Gly65. Residue Lys73 is modified to N6-acetyllysine; alternate. Position 73 is an N6-succinyllysine; alternate (Lys73). Lys82 is modified (N6-acetyllysine). N6-acetyllysine; alternate is present on Lys90. Lys90 carries the post-translational modification N6-succinyllysine; alternate. Tyr96 bears the 3'-nitrotyrosine; alternate mark. Position 96 is a phosphotyrosine; alternate (Tyr96). Residues Lys107 and Lys122 each carry the N6-acetyllysine; alternate modification. An N6-succinyllysine; alternate mark is found at Lys107 and Lys122. Ser143 bears the Phosphoserine mark. An N6-acetyllysine; alternate modification is found at Lys159. The residue at position 159 (Lys159) is an N6-succinyllysine; alternate. Trp162 is a substrate binding site. Lys185 bears the N6-acetyllysine; alternate mark. Lys185 bears the N6-succinyllysine; alternate mark. Asn215 serves as a coordination point for substrate. Lys227 carries the N6-succinyllysine modification. The residue at position 234 (Lys234) is an N6-acetyllysine. 2 positions are modified to N6-acetyllysine; alternate: Lys279 and Lys296. Position 279 is an N6-(pyridoxal phosphate)lysine; alternate (Lys279). Residue Lys296 is modified to N6-succinyllysine; alternate. An N6-acetyllysine modification is found at Lys302. Lys309 is modified (N6-acetyllysine; alternate). Position 309 is an N6-succinyllysine; alternate (Lys309). Position 313 is an asymmetric dimethylarginine (Arg313). Thr333 carries the phosphothreonine modification. N6-acetyllysine; alternate is present on Lys338. An N6-succinyllysine; alternate modification is found at Lys338. Lys345 carries the post-translational modification N6-acetyllysine. Lys363 carries the N6-acetyllysine; alternate modification. Lys363 is modified (N6-succinyllysine; alternate). N6-acetyllysine occurs at positions 364 and 387. 2 positions are modified to N6-acetyllysine; alternate: Lys396 and Lys404. Residues Lys396 and Lys404 each carry the N6-succinyllysine; alternate modification. Arg407 contributes to the substrate binding site.

This sequence belongs to the class-I pyridoxal-phosphate-dependent aminotransferase family. Homodimer. It depends on pyridoxal 5'-phosphate as a cofactor.

It is found in the mitochondrion matrix. The protein resides in the cell membrane. The enzyme catalyses L-aspartate + 2-oxoglutarate = oxaloacetate + L-glutamate. It catalyses the reaction L-kynurenine + 2-oxoglutarate = kynurenate + L-glutamate + H2O. Functionally, catalyzes the irreversible transamination of the L-tryptophan metabolite L-kynurenine to form kynurenic acid (KA). As a member of the malate-aspartate shuttle, it has a key role in the intracellular NAD(H) redox balance. Is important for metabolite exchange between mitochondria and cytosol, and for amino acid metabolism. Facilitates cellular uptake of long-chain free fatty acids. The protein is Aspartate aminotransferase, mitochondrial of Homo sapiens (Human).